Consider the following 187-residue polypeptide: Threonylcarbamoyl-AMP synthase (187 aa).

The 184-residue stretch at 4 to 187 folds into the YrdC-like domain; that stretch reads QSTIAAAITC…DAMNGKVFRG (184 aa).

This sequence belongs to the SUA5 family. TsaC subfamily.

It is found in the cytoplasm. It carries out the reaction L-threonine + hydrogencarbonate + ATP = L-threonylcarbamoyladenylate + diphosphate + H2O. Required for the formation of a threonylcarbamoyl group on adenosine at position 37 (t(6)A37) in tRNAs that read codons beginning with adenine. Catalyzes the conversion of L-threonine, HCO(3)(-)/CO(2) and ATP to give threonylcarbamoyl-AMP (TC-AMP) as the acyladenylate intermediate, with the release of diphosphate. This chain is Threonylcarbamoyl-AMP synthase, found in Pseudoalteromonas translucida (strain TAC 125).